The primary structure comprises 467 residues: Transcription factor TGAL7 (467 aa).

Over residues 1-10 the composition is skewed to basic and acidic residues; sequence MGGSREEDRQ. 2 disordered regions span residues 1 to 42 and 105 to 184; these read MGGS…KESS and QLQV…KTLR. Residues 25-41 are compositionally biased toward low complexity; it reads SSSPTTMIASSSMSKES. Positions 120–129 are enriched in polar residues; that stretch reads QGGQKINSSV. Over residues 145-157 the composition is skewed to basic and acidic residues; the sequence is KDNKNSSLIKKEG. A compositionally biased stretch (polar residues) spans 158–168; that stretch reads SSSGKGATTSN. The segment covering 169-182 has biased composition (basic and acidic residues); the sequence is DPEREGRRTLDPKT. One can recognise a bZIP domain in the interval 179 to 223; that stretch reads DPKTLRRLAQNREAARKSRLRKKAYIQQLESSRIRLSQLEQQVHV. The segment at 181-201 is basic motif; that stretch reads KTLRRLAQNREAARKSRLRKK. The segment at 207 to 221 is leucine-zipper; it reads LESSRIRLSQLEQQV. The DOG1 domain maps to 247–458; sequence ASLFDLEYGR…RALSTLWVAR (212 aa).

It belongs to the bZIP family. Interacts with NPR5/NH4, NH5.1 and NH5.2.

It localises to the nucleus. Transcriptional regulator involved in defense response. The polypeptide is Transcription factor TGAL7 (Oryza sativa subsp. japonica (Rice)).